We begin with the raw amino-acid sequence, 508 residues long: Photosystem II CP47 reaction center protein (508 aa).

A run of 6 helical transmembrane segments spans residues 21–36 (SVHI…WAGS), 101–115 (IVFS…IWHW), 140–156 (GIHL…FGAF), 203–218 (IAAG…FHLS), 237–252 (VLSS…AFVV), and 457–472 (SFAL…HGSR).

Belongs to the PsbB/PsbC family. PsbB subfamily. PSII is composed of 1 copy each of membrane proteins PsbA, PsbB, PsbC, PsbD, PsbE, PsbF, PsbH, PsbI, PsbJ, PsbK, PsbL, PsbM, PsbT, PsbX, PsbY, PsbZ, Psb30/Ycf12, at least 3 peripheral proteins of the oxygen-evolving complex and a large number of cofactors. It forms dimeric complexes. Binds multiple chlorophylls. PSII binds additional chlorophylls, carotenoids and specific lipids. is required as a cofactor.

It localises to the plastid. The protein localises to the chloroplast thylakoid membrane. One of the components of the core complex of photosystem II (PSII). It binds chlorophyll and helps catalyze the primary light-induced photochemical processes of PSII. PSII is a light-driven water:plastoquinone oxidoreductase, using light energy to abstract electrons from H(2)O, generating O(2) and a proton gradient subsequently used for ATP formation. This Draba nemorosa (Woodland whitlowgrass) protein is Photosystem II CP47 reaction center protein.